The primary structure comprises 335 residues: Glyceraldehyde-3-phosphate dehydrogenase (335 aa).

Residues 12–13, aspartate 34, arginine 78, and serine 120 each bind NAD(+); that span reads RI. D-glyceraldehyde 3-phosphate is bound by residues 151-153 and threonine 182; that span reads SCT. The active-site Nucleophile is cysteine 152. Asparagine 183 serves as a coordination point for NAD(+). D-glyceraldehyde 3-phosphate is bound by residues arginine 197, 210–211, and arginine 233; that span reads TG. Asparagine 315 contacts NAD(+).

The protein belongs to the glyceraldehyde-3-phosphate dehydrogenase family. As to quaternary structure, homotetramer.

The protein resides in the cytoplasm. The catalysed reaction is D-glyceraldehyde 3-phosphate + phosphate + NAD(+) = (2R)-3-phospho-glyceroyl phosphate + NADH + H(+). It participates in carbohydrate degradation; glycolysis; pyruvate from D-glyceraldehyde 3-phosphate: step 1/5. In terms of biological role, catalyzes the oxidative phosphorylation of glyceraldehyde 3-phosphate (G3P) to 1,3-bisphosphoglycerate (BPG) using the cofactor NAD. The first reaction step involves the formation of a hemiacetal intermediate between G3P and a cysteine residue, and this hemiacetal intermediate is then oxidized to a thioester, with concomitant reduction of NAD to NADH. The reduced NADH is then exchanged with the second NAD, and the thioester is attacked by a nucleophilic inorganic phosphate to produce BPG. The protein is Glyceraldehyde-3-phosphate dehydrogenase (gap) of Priestia megaterium (strain DSM 319 / IMG 1521) (Bacillus megaterium).